The chain runs to 213 residues: Protein-L-isoaspartate O-methyltransferase (213 aa).

Residue S64 is part of the active site.

This sequence belongs to the methyltransferase superfamily. L-isoaspartyl/D-aspartyl protein methyltransferase family.

The protein resides in the cytoplasm. The enzyme catalyses [protein]-L-isoaspartate + S-adenosyl-L-methionine = [protein]-L-isoaspartate alpha-methyl ester + S-adenosyl-L-homocysteine. Catalyzes the methyl esterification of L-isoaspartyl residues in peptides and proteins that result from spontaneous decomposition of normal L-aspartyl and L-asparaginyl residues. It plays a role in the repair and/or degradation of damaged proteins. This Flavobacterium psychrophilum (strain ATCC 49511 / DSM 21280 / CIP 103535 / JIP02/86) protein is Protein-L-isoaspartate O-methyltransferase.